The primary structure comprises 432 residues: MEGLAVRLLRGSRLLRRNFLTCLSSWKIPPHVSKSSQSEALLNITNNGIHFAPLQTFTDEEMMIKSSVKKFAQEQIAPLVSTMDENSKMEKSVIQGLFQQGLMGIEVDPEYGGTGASFLSTVLVIEELAKVDASVAVFCEIQNTLINTLIRKHGTEEQKATYLPQLTTEKVGSFCLSEAGAGSDSFALKTRADKEGDYYVLNGSKMWISSAEHAGLFLVMANVDPTIGYKGITSFLVDRDTPGLHIGKPENKLGLRASSTCPLTFENVKVPEANILGQIGHGYKYAIGSLNEGRIGIAAQMLGLAQGCFDYTIPYIKERIQFGKRLFDFQGLQHQVAHVATQLEAARLLTYNAARLLEAGKPFIKEASMAKYYASEIAGQTTSKCIEWMGGVGYTKDYPVEKYFRDAKIGTIYEGASNIQLNTIAKHIDAEY.

The transit peptide at 1-33 (MEGLAVRLLRGSRLLRRNFLTCLSSWKIPPHVS) directs the protein to the mitochondrion. K70 bears the N6-acetyllysine; alternate mark. The residue at position 70 (K70) is an N6-succinyllysine; alternate. Residues 174–183 (FCLSEAGAGS) and 207–209 (WIS) contribute to the FAD site. S183 is a substrate binding site. Phosphoserine is present on S183. Residues Y229 and Y283 each contribute to the substrate site. N6-acetyllysine; alternate is present on K284. K284 carries the N6-succinyllysine; alternate modification. 291–294 (NEGR) lines the substrate pocket. FAD is bound by residues R319, Q330, and 387–391 (EWMGG). Catalysis depends on E414, which acts as the Proton acceptor. 416–418 (ASN) is a binding site for FAD. K426 bears the N6-acetyllysine mark.

This sequence belongs to the acyl-CoA dehydrogenase family. In terms of assembly, homotetramer. FAD is required as a cofactor. Ubiquitously expressed.

The protein resides in the mitochondrion matrix. It catalyses the reaction 2-methylbutanoyl-CoA + oxidized [electron-transfer flavoprotein] + H(+) = (2E)-2-methylbut-2-enoyl-CoA + reduced [electron-transfer flavoprotein]. The catalysed reaction is (2S)-2-methylbutanoyl-CoA + oxidized [electron-transfer flavoprotein] + H(+) = (2E)-2-methylbut-2-enoyl-CoA + reduced [electron-transfer flavoprotein]. The enzyme catalyses (2R)-2-methylbutanoyl-CoA + oxidized [electron-transfer flavoprotein] + H(+) = ethylacryloyl-CoA + reduced [electron-transfer flavoprotein]. It carries out the reaction butanoyl-CoA + oxidized [electron-transfer flavoprotein] + H(+) = (2E)-butenoyl-CoA + reduced [electron-transfer flavoprotein]. It catalyses the reaction 2-methylpropanoyl-CoA + oxidized [electron-transfer flavoprotein] + H(+) = 2-methylpropenoyl-CoA + reduced [electron-transfer flavoprotein]. The catalysed reaction is hexanoyl-CoA + oxidized [electron-transfer flavoprotein] + H(+) = (2E)-hexenoyl-CoA + reduced [electron-transfer flavoprotein]. The enzyme catalyses 2-methylhexanoyl-CoA + oxidized [electron-transfer flavoprotein] + H(+) = 2-methylhexenoyl-CoA + reduced [electron-transfer flavoprotein]. It carries out the reaction valproyl-CoA + oxidized [electron-transfer flavoprotein] + H(+) = (2E)-2-propylpent-2-enoyl-CoA + reduced [electron-transfer flavoprotein]. The protein operates within lipid metabolism; mitochondrial fatty acid beta-oxidation. It participates in amino-acid degradation; L-isoleucine degradation. Competitively inhibited by valproyl-CoA. Functionally, short and branched chain specific acyl-CoA dehydrogenase that catalyzes the removal of one hydrogen from C-2 and C-3 of the fatty acyl-CoA thioester, resulting in the formation of trans-2-enoyl-CoA. Among the different mitochondrial acyl-CoA dehydrogenases, acts specifically on short and branched chain acyl-CoA derivatives such as (S)-2-methylbutyryl-CoA as well as short straight chain acyl-CoAs such as butyryl-CoA. Plays an important role in the metabolism of L-isoleucine by catalyzing the dehydrogenation of 2-methylbutyryl-CoA, one of the steps of the L-isoleucine catabolic pathway. Can also act on valproyl-CoA, a metabolite of valproic acid, an antiepileptic drug. In Homo sapiens (Human), this protein is Short/branched chain specific acyl-CoA dehydrogenase, mitochondrial.